Consider the following 209-residue polypeptide: Uridine kinase (209 aa).

12–19 serves as a coordination point for ATP; that stretch reads GGSGGGKT.

It belongs to the uridine kinase family.

The protein resides in the cytoplasm. The enzyme catalyses uridine + ATP = UMP + ADP + H(+). It carries out the reaction cytidine + ATP = CMP + ADP + H(+). The protein operates within pyrimidine metabolism; CTP biosynthesis via salvage pathway; CTP from cytidine: step 1/3. Its pathway is pyrimidine metabolism; UMP biosynthesis via salvage pathway; UMP from uridine: step 1/1. This chain is Uridine kinase, found in Streptococcus agalactiae serotype V (strain ATCC BAA-611 / 2603 V/R).